The sequence spans 95 residues: Large ribosomal subunit protein uL23 (95 aa).

The protein belongs to the universal ribosomal protein uL23 family. Part of the 50S ribosomal subunit. Contacts protein L29, and trigger factor when it is bound to the ribosome.

Its function is as follows. One of the early assembly proteins it binds 23S rRNA. One of the proteins that surrounds the polypeptide exit tunnel on the outside of the ribosome. Forms the main docking site for trigger factor binding to the ribosome. The polypeptide is Large ribosomal subunit protein uL23 (Pediococcus pentosaceus (strain ATCC 25745 / CCUG 21536 / LMG 10740 / 183-1w)).